The primary structure comprises 162 residues: NADH-quinone oxidoreductase subunit I (162 aa).

4Fe-4S ferredoxin-type domains are found at residues 53–83 and 93–122; these read LRRYANGEERCIACKLCEAICPAQAITIEAE and TRYDIDMTKCIYCGFCEEACPVDAIVEGPN. [4Fe-4S] cluster is bound by residues Cys-63, Cys-66, Cys-69, Cys-73, Cys-102, Cys-105, Cys-108, and Cys-112.

This sequence belongs to the complex I 23 kDa subunit family. As to quaternary structure, NDH-1 is composed of 14 different subunits. Subunits NuoA, H, J, K, L, M, N constitute the membrane sector of the complex. [4Fe-4S] cluster is required as a cofactor.

It localises to the cell inner membrane. The catalysed reaction is a quinone + NADH + 5 H(+)(in) = a quinol + NAD(+) + 4 H(+)(out). Its function is as follows. NDH-1 shuttles electrons from NADH, via FMN and iron-sulfur (Fe-S) centers, to quinones in the respiratory chain. The immediate electron acceptor for the enzyme in this species is believed to be ubiquinone. Couples the redox reaction to proton translocation (for every two electrons transferred, four hydrogen ions are translocated across the cytoplasmic membrane), and thus conserves the redox energy in a proton gradient. The polypeptide is NADH-quinone oxidoreductase subunit I (Rhodospirillum rubrum (strain ATCC 11170 / ATH 1.1.1 / DSM 467 / LMG 4362 / NCIMB 8255 / S1)).